A 103-amino-acid polypeptide reads, in one-letter code: Small ribosomal subunit protein bS6c (103 aa).

The protein belongs to the bacterial ribosomal protein bS6 family.

It localises to the plastid. Its subcellular location is the chloroplast. Binds together with bS18 to 16S ribosomal RNA. The protein is Small ribosomal subunit protein bS6c of Thalassiosira pseudonana (Marine diatom).